Consider the following 337-residue polypeptide: Integrase/recombinase (337 aa).

The 81-residue stretch at 14 to 94 folds into the Core-binding (CB) domain; sequence VKVLDQLRER…ALLFFYGKVL (81 aa). The 217-residue stretch at 112–328 folds into the Tyr recombinase domain; that stretch reads RLPVVLTPDE…GGAGVRSPLD (217 aa). Catalysis depends on residues Arg146, Lys171, His277, Arg280, and His303. Tyr312 functions as the O-(3'-phospho-DNA)-tyrosine intermediate in the catalytic mechanism.

Belongs to the 'phage' integrase family.

In terms of biological role, putative integrase believed to be involved in the insertion of antibiotic resistance genes into plasmids and transposons. In Escherichia coli, this protein is Integrase/recombinase (int).